A 274-amino-acid polypeptide reads, in one-letter code: MLSVAARSGPFAPVLSATSRGVAGALRPLLQSAVPATSEPPVLDVKRPFLCRESLSGQAATRPLVATVGLNVPASVRYSHTDIKVPDFSDYRRAEVLDSTKSSKESSEARKGFSYLVTATTTVGVAYAAKNAVSQFVSSMSASADVLAMSKIEIKLSDIPEGKNMAFKWRGKPLFVRHRTKKEIDQEAAVEVSQLRDPQHDLERVKKPEWVILIGVCTHLGCVPIANAGDFGGYYCPCHGSHYDASGRIRKGPAPLNLEVPTYEFTSGDVVVVG.

Residues 79–103 are Mitochondrial matrix-facing; the sequence is SHTDIKVPDFSDYRRAEVLDSTKSS. A helical membrane pass occupies residues 104–140; it reads KESSEARKGFSYLVTATTTVGVAYAAKNAVSQFVSSM. At 141–274 the chain is on the mitochondrial intermembrane side; it reads SASADVLAMS…FTSGDVVVVG (134 aa). Residues 187–272 enclose the Rieske domain; the sequence is EAAVEVSQLR…YEFTSGDVVV (86 aa). 5 residues coordinate [2Fe-2S] cluster: C217, H219, C236, H239, and S241. Cysteines 222 and 238 form a disulfide.

The protein belongs to the Rieske iron-sulfur protein family. Component of the ubiquinol-cytochrome c oxidoreductase (cytochrome b-c1 complex, complex III, CIII), a multisubunit enzyme composed of 11 subunits. The complex is composed of 3 respiratory subunits cytochrome b, cytochrome c1 and Rieske protein UQCRFS1, 2 core protein subunits UQCRC1/QCR1 and UQCRC2/QCR2, and 6 low-molecular weight protein subunits UQCRH/QCR6, UQCRB/QCR7, UQCRQ/QCR8, UQCR10/QCR9, UQCR11/QCR10 and subunit 9, the cleavage product of Rieske protein UQCRFS1. The complex exists as an obligatory dimer and forms supercomplexes (SCs) in the inner mitochondrial membrane with NADH-ubiquinone oxidoreductase (complex I, CI) and cytochrome c oxidase (complex IV, CIV), resulting in different assemblies (supercomplex SCI(1)III(2)IV(1) and megacomplex MCI(2)III(2)IV(2)). Incorporation of the Rieske protein UQCRFS1 is the penultimate step in complex III assembly. Interacts with TTC19, which is involved in the clearance of UQCRFS1 fragments. As to quaternary structure, component of the ubiquinol-cytochrome c oxidoreductase (cytochrome b-c1 complex, complex III, CIII). Subunit 9 corresponds to the mitochondrial targeting sequence (MTS) of Rieske protein UQCRFS1. It is retained after processing and incorporated inside complex III, where it remains bound to the complex and localizes between the 2 core subunits UQCRC1/QCR1 and UQCRC2/QCR2. [2Fe-2S] cluster serves as cofactor. Proteolytic processing is necessary for the correct insertion of UQCRFS1 in the complex III dimer. Several fragments are generated during UQCRFS1 insertion, most probably due to the endogenous matrix-processing peptidase (MPP) activity of the 2 core protein subunits UQCRC1/QCR1 and UQCRC2/QCR2, which are homologous to the 2 mitochondrial-processing peptidase (MPP) subunits beta-MPP and alpha-MPP respectively. The action of the protease is also necessary for the clearance of the UQCRFS1 fragments.

Its subcellular location is the mitochondrion inner membrane. It catalyses the reaction a quinol + 2 Fe(III)-[cytochrome c](out) = a quinone + 2 Fe(II)-[cytochrome c](out) + 2 H(+)(out). In terms of biological role, component of the ubiquinol-cytochrome c oxidoreductase, a multisubunit transmembrane complex that is part of the mitochondrial electron transport chain which drives oxidative phosphorylation. The respiratory chain contains 3 multisubunit complexes succinate dehydrogenase (complex II, CII), ubiquinol-cytochrome c oxidoreductase (cytochrome b-c1 complex, complex III, CIII) and cytochrome c oxidase (complex IV, CIV), that cooperate to transfer electrons derived from NADH and succinate to molecular oxygen, creating an electrochemical gradient over the inner membrane that drives transmembrane transport and the ATP synthase. The cytochrome b-c1 complex catalyzes electron transfer from ubiquinol to cytochrome c, linking this redox reaction to translocation of protons across the mitochondrial inner membrane, with protons being carried across the membrane as hydrogens on the quinol. In the process called Q cycle, 2 protons are consumed from the matrix, 4 protons are released into the intermembrane space and 2 electrons are passed to cytochrome c. The Rieske protein is a catalytic core subunit containing a [2Fe-2S] iron-sulfur cluster. It cycles between 2 conformational states during catalysis to transfer electrons from the quinol bound in the Q(0) site in cytochrome b to cytochrome c1. Incorporation of UQCRFS1 is the penultimate step in complex III assembly. Its function is as follows. Component of the ubiquinol-cytochrome c oxidoreductase (cytochrome b-c1 complex, complex III, CIII). UQCRFS1 undergoes proteolytic processing once it is incorporated in the complex III dimer. One of the fragments, called subunit 9, corresponds to its mitochondrial targeting sequence (MTS). The proteolytic processing is necessary for the correct insertion of UQCRFS1 in the complex III dimer, but the persistence of UQCRFS1-derived fragments may prevent newly imported UQCRFS1 to be processed and assembled into complex III and is detrimental for the complex III structure and function. The protein is Cytochrome b-c1 complex subunit Rieske, mitochondrial (Uqcrfs1) of Rattus norvegicus (Rat).